The chain runs to 881 residues: DNA replication helicase (881 aa).

Residue 90 to 97 (GNAGSGKS) coordinates ATP.

The protein belongs to the herpesviridae helicase family. Associates with the primase and the primase-associated factor to form the helicase-primase complex.

It localises to the host nucleus. Functionally, component of the helicase/primase complex. Unwinds the DNA at the replication forks and generates single-stranded DNA for both leading and lagging strand synthesis. The primase synthesizes short RNA primers on the lagging strand that the polymerase elongates using dNTPs. Possesses helicase-like motifs and therefore may act as the helicase subunit of the complex. This chain is DNA replication helicase, found in Homo sapiens (Human).